The sequence spans 177 residues: Large ribosomal subunit protein uL6 (177 aa).

A disordered region spans residues 155–177 (EPYKGKGVKHADERIFRKEGKKK).

The protein belongs to the universal ribosomal protein uL6 family. In terms of assembly, part of the 50S ribosomal subunit.

Its function is as follows. This protein binds to the 23S rRNA, and is important in its secondary structure. It is located near the subunit interface in the base of the L7/L12 stalk, and near the tRNA binding site of the peptidyltransferase center. In Bartonella tribocorum (strain CIP 105476 / IBS 506), this protein is Large ribosomal subunit protein uL6.